Here is a 158-residue protein sequence, read N- to C-terminus: Small ribosomal subunit protein uS15 (158 aa).

Over residues 1-18 the composition is skewed to basic residues; the sequence is MARMHARKRGKSGSKRPP. The segment at 1-21 is disordered; the sequence is MARMHARKRGKSGSKRPPRTA.

It belongs to the universal ribosomal protein uS15 family. As to quaternary structure, part of the 30S ribosomal subunit.

The sequence is that of Small ribosomal subunit protein uS15 from Pyrococcus abyssi (strain GE5 / Orsay).